The sequence spans 256 residues: Large ribosomal subunit protein bL28m (256 aa).

A mitochondrion-targeting transit peptide spans 1–55 (MPLHKVPVGLWKRLRLREGIYSRLPAHYLRSLEEARTPTPVHFRPHGAKFKINPK).

It belongs to the bacterial ribosomal protein bL28 family. As to quaternary structure, component of the mitochondrial ribosome large subunit (39S) which comprises a 16S rRNA and about 50 distinct proteins. Interacts with OXA1L.

It localises to the mitochondrion. The sequence is that of Large ribosomal subunit protein bL28m (MRPL28) from Bos taurus (Bovine).